A 514-amino-acid chain; its full sequence is Zinc finger and BTB domain-containing protein 2 (514 aa).

Residues 24–89 (CDCTVAIGDV…MYTGKMAPQL (66 aa)) enclose the BTB domain. Glycyl lysine isopeptide (Lys-Gly) (interchain with G-Cter in SUMO2) cross-links involve residues K147 and K154. Positions 149–231 (ASAPEKLGRD…LEASSSDEQP (83 aa)) are disordered. 2 stretches are compositionally biased toward polar residues: residues 161-200 (PQTS…PLQT) and 222-231 (LEASSSDEQP). Residues 254 to 276 (YACHLCGRRFTLRSSLREHLQIH) form a C2H2-type 1 zinc finger. Phosphoserine is present on S341. K362 participates in a covalent cross-link: Glycyl lysine isopeptide (Lys-Gly) (interchain with G-Cter in SUMO2). Residues 363 to 385 (YECTICGRKFIQKSHWREHMYIH) form a C2H2-type 2 zinc finger. The C2H2-type 3; atypical zinc finger occupies 390–410 (FKCSTCDKSFCRANQAARHVC). A C2H2-type 4; atypical zinc finger spans residues 448–468 (YKCNLCDKTFSTPNEVVKHSC). Glycyl lysine isopeptide (Lys-Gly) (interchain with G-Cter in SUMO2) cross-links involve residues K465, K505, and K506.

The protein resides in the nucleus. Its function is as follows. May be involved in transcriptional regulation. This chain is Zinc finger and BTB domain-containing protein 2 (ZBTB2), found in Homo sapiens (Human).